A 177-amino-acid polypeptide reads, in one-letter code: Disulfide bond formation protein B (177 aa).

The Cytoplasmic portion of the chain corresponds to 1-14; it reads MLALLKQFSEKRFV. Residues 15–31 traverse the membrane as a helical segment; the sequence is WFLLAFSSLALESTALY. Topologically, residues 32-49 are periplasmic; it reads FQYGMGLQPCVLCVYERL. Residues C41 and C44 are joined by a disulfide bond. Residues 50-65 traverse the membrane as a helical segment; sequence AMIGLFVAGTIALLQP. Topologically, residues 66–72 are cytoplasmic; that stretch reads RVFILRL. The helical transmembrane segment at 73 to 90 threads the bilayer; sequence IALALGLFSSIKGLLISF. Over 91-145 the chain is Periplasmic; the sequence is RHLDLQMNPAPWKQCEFIPNFPETLPFHQWFPFIFNPTGSCNESQWSLFGLTMVQ. An intrachain disulfide couples C105 to C131. The chain crosses the membrane as a helical span at residues 146–164; the sequence is WLVVIFSLYVVILTLLLIA. Residues 165-177 are Cytoplasmic-facing; the sequence is QVIKTRKQRRLFN.

This sequence belongs to the DsbB family.

The protein localises to the cell inner membrane. Functionally, required for disulfide bond formation in some periplasmic proteins. Acts by oxidizing the DsbA protein. The sequence is that of Disulfide bond formation protein B from Haemophilus influenzae (strain ATCC 51907 / DSM 11121 / KW20 / Rd).